Here is an 86-residue protein sequence, read N- to C-terminus: Protein U17 (86 aa).

This is Protein U17 (U17/U16) from Homo sapiens (Human).